The chain runs to 117 residues: Immunoglobulin heavy variable 1-69D (117 aa).

A signal peptide spans 1-19; sequence MDWTWRFLFVVAAATGVQS. At Q20 the chain carries Pyrrolidone carboxylic acid. Residues 20–44 form a framework-1 region; sequence QVQLVQSGAEVKKPGSSVKVSCKAS. Residues 20 to 117 form the Ig-like domain; that stretch reads QVQLVQSGAE…EDTAVYYCAR (98 aa). A disulfide bond links C41 and C115. The interval 45 to 52 is complementarity-determining-1; it reads GGTFSSYA. A framework-2 region spans residues 53-69; that stretch reads ISWVRQAPGQGLEWMGG. The complementarity-determining-2 stretch occupies residues 70–77; that stretch reads IIPIFGTA. A framework-3 region spans residues 78 to 115; the sequence is NYAQKFQGRVTITADESTSTAYMELSSLRSEDTAVYYC. The segment at 116–117 is complementarity-determining-3; it reads AR.

Immunoglobulins are composed of two identical heavy chains and two identical light chains; disulfide-linked.

Its subcellular location is the secreted. The protein resides in the cell membrane. In terms of biological role, v region of the variable domain of immunoglobulin heavy chains that participates in the antigen recognition. Immunoglobulins, also known as antibodies, are membrane-bound or secreted glycoproteins produced by B lymphocytes. In the recognition phase of humoral immunity, the membrane-bound immunoglobulins serve as receptors which, upon binding of a specific antigen, trigger the clonal expansion and differentiation of B lymphocytes into immunoglobulins-secreting plasma cells. Secreted immunoglobulins mediate the effector phase of humoral immunity, which results in the elimination of bound antigens. The antigen binding site is formed by the variable domain of one heavy chain, together with that of its associated light chain. Thus, each immunoglobulin has two antigen binding sites with remarkable affinity for a particular antigen. The variable domains are assembled by a process called V-(D)-J rearrangement and can then be subjected to somatic hypermutations which, after exposure to antigen and selection, allow affinity maturation for a particular antigen. The polypeptide is Immunoglobulin heavy variable 1-69D (Homo sapiens (Human)).